Here is a 123-residue protein sequence, read N- to C-terminus: DNA-directed RNA polymerase subunit omega (123 aa).

Positions 72-100 (QRVLPSEDEEDAAREERGQQMEALPAPPV) are disordered.

It belongs to the RNA polymerase subunit omega family. The RNAP catalytic core consists of 2 alpha, 1 beta, 1 beta' and 1 omega subunit. When a sigma factor is associated with the core the holoenzyme is formed, which can initiate transcription.

It catalyses the reaction RNA(n) + a ribonucleoside 5'-triphosphate = RNA(n+1) + diphosphate. Its function is as follows. Promotes RNA polymerase assembly. Latches the N- and C-terminal regions of the beta' subunit thereby facilitating its interaction with the beta and alpha subunits. This is DNA-directed RNA polymerase subunit omega from Maricaulis maris (strain MCS10) (Caulobacter maris).